Consider the following 458-residue polypeptide: ATP synthase subunit beta (458 aa).

Gly148–Thr155 is a binding site for ATP.

This sequence belongs to the ATPase alpha/beta chains family. As to quaternary structure, F-type ATPases have 2 components, CF(1) - the catalytic core - and CF(0) - the membrane proton channel. CF(1) has five subunits: alpha(3), beta(3), gamma(1), delta(1), epsilon(1). CF(0) has three main subunits: a(1), b(2) and c(9-12). The alpha and beta chains form an alternating ring which encloses part of the gamma chain. CF(1) is attached to CF(0) by a central stalk formed by the gamma and epsilon chains, while a peripheral stalk is formed by the delta and b chains.

Its subcellular location is the cell inner membrane. The enzyme catalyses ATP + H2O + 4 H(+)(in) = ADP + phosphate + 5 H(+)(out). Functionally, produces ATP from ADP in the presence of a proton gradient across the membrane. The catalytic sites are hosted primarily by the beta subunits. The polypeptide is ATP synthase subunit beta (Alkalilimnicola ehrlichii (strain ATCC BAA-1101 / DSM 17681 / MLHE-1)).